A 507-amino-acid chain; its full sequence is Phytoene dehydrogenase (507 aa).

12-45 is a binding site for FAD; sequence VVVGAGLAGLAAALHLLGAGRRVTVVEREDVPGG.

This sequence belongs to the carotenoid/retinoid oxidoreductase family. It depends on FAD as a cofactor.

It participates in carotenoid biosynthesis; lycopene biosynthesis. This enzyme converts phytoene into zeta-carotene via the intermediary of phytofluene by the symmetrical introduction of two double bonds at the C-11 and C-11' positions of phytoene. This Streptomyces griseus protein is Phytoene dehydrogenase (crtI).